The chain runs to 641 residues: Chaperone protein DnaK (641 aa).

A Phosphothreonine; by autocatalysis modification is found at threonine 200. The segment covering 606–623 (AEQGGNADAASGNAQASK) has biased composition (low complexity). Residues 606 to 628 (AEQGGNADAASGNAQASKAADDV) are disordered.

The protein belongs to the heat shock protein 70 family.

Acts as a chaperone. The polypeptide is Chaperone protein DnaK (Xanthomonas axonopodis pv. citri (strain 306)).